A 184-amino-acid polypeptide reads, in one-letter code: uncharacterized protein (184 aa).

This is an uncharacterized protein from Caenorhabditis elegans.